The following is a 198-amino-acid chain: Probable molybdenum cofactor guanylyltransferase (198 aa).

Residues 9–11, lysine 22, aspartate 66, and aspartate 95 each bind GTP; that span reads LAG. Residue aspartate 95 coordinates Mg(2+).

This sequence belongs to the MobA family. Mg(2+) serves as cofactor.

Its subcellular location is the cytoplasm. The catalysed reaction is Mo-molybdopterin + GTP + H(+) = Mo-molybdopterin guanine dinucleotide + diphosphate. Transfers a GMP moiety from GTP to Mo-molybdopterin (Mo-MPT) cofactor (Moco or molybdenum cofactor) to form Mo-molybdopterin guanine dinucleotide (Mo-MGD) cofactor. The polypeptide is Probable molybdenum cofactor guanylyltransferase (Clostridium perfringens (strain SM101 / Type A)).